The chain runs to 554 residues: Germacrene A synthase (554 aa).

Mg(2+)-binding residues include Asp-306, Asp-310, Thr-453, and Glu-457. The DDXXD motif signature appears at Asp-306–Asp-310.

The protein belongs to the terpene synthase family. Mg(2+) is required as a cofactor.

The protein localises to the cytoplasm. It localises to the cytosol. The enzyme catalyses (2E,6E)-farnesyl diphosphate = (+)-(R)-germacrene A + diphosphate. The protein operates within secondary metabolite biosynthesis; terpenoid biosynthesis. In terms of biological role, sesquiterpene synthase involved in germacrene A biosynthesis. Also produces additional sesquiterpene products, including 4,5-di-epi-aristolochene, eremophilene, alpha-selinene. This is Germacrene A synthase from Pogostemon cablin (Patchouli).